We begin with the raw amino-acid sequence, 114 residues long: UPF0145 protein Acry_1752 (114 aa).

The protein belongs to the UPF0145 family.

This chain is UPF0145 protein Acry_1752, found in Acidiphilium cryptum (strain JF-5).